The sequence spans 362 residues: Heme A synthase (362 aa).

5 helical membrane-spanning segments follow: residues 12–32 (AVKI…LVGG), 102–122 (VIGL…HLGG), 128–148 (LWLI…MVAS), 159–179 (ERLA…VWTL), and 198–218 (AAAL…VAGL). H262 provides a ligand contact to heme. Helical transmembrane passes span 264–286 (MLAY…ARAG), 291–311 (GAVW…FTLL), and 314–334 (VPIG…MLGV). H322 serves as a coordination point for heme.

Belongs to the COX15/CtaA family. Type 2 subfamily. In terms of assembly, interacts with CtaB. Heme b serves as cofactor.

It is found in the cell membrane. It catalyses the reaction Fe(II)-heme o + 2 A + H2O = Fe(II)-heme a + 2 AH2. Its pathway is porphyrin-containing compound metabolism; heme A biosynthesis; heme A from heme O: step 1/1. Functionally, catalyzes the conversion of heme O to heme A by two successive hydroxylations of the methyl group at C8. The first hydroxylation forms heme I, the second hydroxylation results in an unstable dihydroxymethyl group, which spontaneously dehydrates, resulting in the formyl group of heme A. This chain is Heme A synthase, found in Rhodopseudomonas palustris (strain BisA53).